We begin with the raw amino-acid sequence, 63 residues long: Putative conjugal transfer lipoprotein XF_a0011.1 (63 aa).

Residues 1–15 form the signal peptide; that stretch reads MRYTFGIVTVYLLAG. Cysteine 16 is lipidated: N-palmitoyl cysteine. Cysteine 16 is lipidated: S-diacylglycerol cysteine.

It to B.suis ORF12 in VirB region.

It localises to the cell inner membrane. The sequence is that of Putative conjugal transfer lipoprotein XF_a0011.1 from Xylella fastidiosa (strain 9a5c).